The primary structure comprises 484 residues: Hexokinase-1 (484 aa).

In terms of domain architecture, Hexokinase spans 25–465 (KTLQDHLDEL…SGVGAALVSA (441 aa)). The hexokinase small subdomain stretch occupies residues 79 to 212 (DGNEHGSYLA…CNNVRLNAIL (134 aa)). 90–95 (DLGGTN) provides a ligand contact to ATP. Residues 160–161 (SY), 177–178 (TK), and 213–214 (SD) each bind substrate. A hexokinase large subdomain region spans residues 213-454 (SDTTGTLVAS…SKVVTIPAED (242 aa)). Position 237 (Thr-237) interacts with ATP. Residues Asn-240, Glu-269, and Glu-302 each coordinate substrate. Residues 307 to 308 (GC), 344 to 348 (TSVLS), and 419 to 423 (SVYNL) contribute to the ATP site.

It belongs to the hexokinase family. In terms of assembly, monomer.

The catalysed reaction is a D-hexose + ATP = a D-hexose 6-phosphate + ADP + H(+). It catalyses the reaction D-mannose + ATP = D-mannose 6-phosphate + ADP + H(+). It carries out the reaction D-fructose + ATP = D-fructose 6-phosphate + ADP + H(+). The enzyme catalyses D-glucose + ATP = D-glucose 6-phosphate + ADP + H(+). Its pathway is carbohydrate metabolism; hexose metabolism. The protein operates within carbohydrate degradation; glycolysis; D-glyceraldehyde 3-phosphate and glycerone phosphate from D-glucose: step 1/4. Functionally, catalyzes the phosphorylation of hexose (six-carbon sugars) to hexose 6-phosphate. Phosphorylates D-fructose, D-mannose and, to a lower extent, D-glucose. Compared to hxk2, has low affinity for D-glucose. In Schizosaccharomyces pombe (strain 972 / ATCC 24843) (Fission yeast), this protein is Hexokinase-1.